The chain runs to 60 residues: uncharacterized protein (60 aa).

The helical transmembrane segment at 19–39 threads the bilayer; it reads LSIMCGCSIYFLLLVFILTFY.

It is found in the membrane. This is an uncharacterized protein from Saccharomyces cerevisiae (strain ATCC 204508 / S288c) (Baker's yeast).